The chain runs to 574 residues: MEEVDSKDISSSKAEDCVPSGGECHEEAVDELMKEDEVGGEEETEQTKGIKRKAESILPRKNKQGRLSLEQEDEEDANKESGGGGSEKEDAATEQEKGVESEDARKKKEDEVLASSVNDAEPESKVPPSTPAKTGEETEETRSGEEQEKPKEMQEVKLTKSLVEEVRCDRQQGRSSGMTPEDEPPRSESSPCAPGQVKKTGTNASSKNEPAGAKWKGQPAVDASSDESKLRCCKEEYCIGTWNVRSMNPGKLDVVKQEMDRINIDILGISELKWTGMGELNSDDHYIYYCGQQSLRRNGVALIVNKRVQNAIIGCNLKNDRMISLRFQGKPFNLTVIQVFAPTPYAEEGEVYRFYEDLQHLLEITPKIDVLFIIGDWNAKVGSQEIPGITGRFGLGMQNEAGRRLIDFCHHNRLVIANTLFQQPSRRLYTWTSPDGRFRDQIDYIICRQRWRSSVQSAKTRPGADCGSDHKLLIAKFRLKLKIIPKTTRPFRGTNEADDTSEESKPSSEQKGKEKPQASVPSAVSSVPGGSGVTKEVGATSQEAKSVVKQNEKEEPQANVLSAVPSLPAGSGVF.

5 stretches are compositionally biased toward basic and acidic residues: residues 1–16, 23–37, 45–55, 86–111, and 134–172; these read MEEVDSKDISSSKAED, ECHEEAVDELMKEDE, EQTKGIKRKAE, SEKEDAATEQEKGVESEDARKKKEDE, and TGEETEETRSGEEQEKPKEMQEVKLTKSLVEEVRCDRQQ. Disordered stretches follow at residues 1–222 and 488–574; these read MEEV…PAVD and TRPF…SGVF. Over residues 199–208 the composition is skewed to polar residues; it reads KTGTNASSKN. The tract at residues 493–572 is hydrophilic; it reads GTNEADDTSE…AVPSLPAGSG (80 aa). The span at 502–516 shows a compositional bias: basic and acidic residues; sequence EESKPSSEQKGKEKP. Residues 518 to 528 show a composition bias toward low complexity; it reads ASVPSAVSSVP.

The protein resides in the cytoplasm. It is found in the nucleus. This Tragulus javanicus (Lesser Malay chevrotain) protein is Craniofacial development protein 2 (CFDP2).